The chain runs to 276 residues: Insulin-like growth factor-binding protein 2-A (276 aa).

The N-terminal stretch at 1-22 (MLSYVSCGLLLALVTFHGTARS) is a signal peptide. Residues 24–105 (MVFRCPSCTA…VQGLGRCGRK (82 aa)) enclose the IGFBP N-terminal domain. Intrachain disulfides connect cysteine 28–cysteine 55, cysteine 31–cysteine 57, cysteine 39–cysteine 58, cysteine 46–cysteine 61, cysteine 69–cysteine 82, cysteine 76–cysteine 102, cysteine 180–cysteine 214, cysteine 225–cysteine 236, and cysteine 238–cysteine 259. One can recognise a Thyroglobulin type-1 domain in the interval 177 to 259 (QSQCQQELDQ…SPLIRGDPNC (83 aa)). The Cell attachment site signature appears at 254 to 256 (RGD).

In terms of assembly, interacts equally well with igf1 and igf2. In terms of tissue distribution, in embryos at 24 hpf, initially expressed in the lens and cranial region, and at 48 and 72 hpf in the brain boundary vasculature. Expression in these regions persists throughout the hatching period and by 96 hpf expression is most abundant in the liver. In both male and female adults, highest expression is in the liver with modest expression in the brain. In male but not females adults, expressed at a low level in muscle and gonad. Also expressed in the adult intestine.

The protein localises to the secreted. Its function is as follows. IGF-binding proteins prolong the half-life of the IGFs and have been shown to either inhibit or stimulate the growth promoting effects of the IGFs on cell culture. They alter the interaction of IGFs with their cell surface receptors. This Danio rerio (Zebrafish) protein is Insulin-like growth factor-binding protein 2-A (igfbp2a).